Here is a 179-residue protein sequence, read N- to C-terminus: Large ribosomal subunit protein uL5 (179 aa).

The protein belongs to the universal ribosomal protein uL5 family. As to quaternary structure, part of the 50S ribosomal subunit; part of the 5S rRNA/L5/L18/L25 subcomplex. Contacts the 5S rRNA and the P site tRNA. Forms a bridge to the 30S subunit in the 70S ribosome.

In terms of biological role, this is one of the proteins that bind and probably mediate the attachment of the 5S RNA into the large ribosomal subunit, where it forms part of the central protuberance. In the 70S ribosome it contacts protein S13 of the 30S subunit (bridge B1b), connecting the 2 subunits; this bridge is implicated in subunit movement. Contacts the P site tRNA; the 5S rRNA and some of its associated proteins might help stabilize positioning of ribosome-bound tRNAs. The chain is Large ribosomal subunit protein uL5 from Xylella fastidiosa (strain M12).